Consider the following 213-residue polypeptide: 3-isopropylmalate dehydratase small subunit (213 aa).

Belongs to the LeuD family. LeuD type 1 subfamily. As to quaternary structure, heterodimer of LeuC and LeuD.

The enzyme catalyses (2R,3S)-3-isopropylmalate = (2S)-2-isopropylmalate. It participates in amino-acid biosynthesis; L-leucine biosynthesis; L-leucine from 3-methyl-2-oxobutanoate: step 2/4. Its function is as follows. Catalyzes the isomerization between 2-isopropylmalate and 3-isopropylmalate, via the formation of 2-isopropylmaleate. This Neisseria meningitidis serogroup A / serotype 4A (strain DSM 15465 / Z2491) protein is 3-isopropylmalate dehydratase small subunit.